Reading from the N-terminus, the 422-residue chain is MATFALPFCEIPEDLQLRILSLLTPAEISSFACTSKRFASLCQEDGKIWHVMCDQRWGKKTKIQKWANGQIPYRHLYKTLKGLENLIGFWRLCGRANPAASSPPLVFFDWGSSFILGSRVLSTGDDTYEVKKTPFLLMGISPEGRSENFLDLVGGNLRSVDDDLKELEASNNLVSVDVNFMGNGHIMVEENRCFTNNNRREDQRSSGDESDDLISSPNFSEMYTQLANKTSPGGDRRRQKRKEKERQASRTKWEPEHFLKVADCSPTPTRPLQGLWKGFCEGSIELYLVKYDEVGGIICRKVEDLSLSRYTPPVFWTPKHTFIRSPFSAEEELLLNSRIHISPFAEVHENVVSGMLYMKSSCDLVLPGEPGNGIGFLRGEGRVWLYDNGTFGFGFLRDQFIIDLKRVALEDGCLADEVEACM.

In terms of domain architecture, F-box spans 5-52; it reads ALPFCEIPEDLQLRILSLLTPAEISSFACTSKRFASLCQEDGKIWHVM. 2 stretches are compositionally biased toward basic and acidic residues: residues 197 to 207 and 242 to 252; these read NNRREDQRSSG and KEKERQASRTK. Disordered stretches follow at residues 197–216 and 226–252; these read NNRR…LISS and LANK…SRTK.

This is F-box protein At3g12350 from Arabidopsis thaliana (Mouse-ear cress).